Consider the following 142-residue polypeptide: Putative transcriptional regulatory protein PF0535 (142 aa).

This sequence belongs to the Tfx family.

Functionally, putative transcriptional regulator. This chain is Putative transcriptional regulatory protein PF0535, found in Pyrococcus furiosus (strain ATCC 43587 / DSM 3638 / JCM 8422 / Vc1).